The following is a 311-amino-acid chain: CID domain-containing protein 1 (311 aa).

The region spanning 1–134 (MSDFTEQTLR…RLQEAHQQMK (134 aa)) is the CID domain. Residues 224–256 (MLEDYVKRLKEETKERESLETNLNMLIQNVRMS) adopt a coiled-coil conformation.

This chain is CID domain-containing protein 1 (cids-1), found in Caenorhabditis briggsae.